The following is a 1403-amino-acid chain: DNA-directed RNA polymerase subunit beta' (1403 aa).

4 residues coordinate Zn(2+): C70, C72, C85, and C88. 3 residues coordinate Mg(2+): D460, D462, and D464. The Zn(2+) site is built by C814, C888, C895, and C898. Positions R1369–A1403 are disordered. Polar residues predominate over residues E1379–S1388.

Belongs to the RNA polymerase beta' chain family. As to quaternary structure, the RNAP catalytic core consists of 2 alpha, 1 beta, 1 beta' and 1 omega subunit. When a sigma factor is associated with the core the holoenzyme is formed, which can initiate transcription. Mg(2+) is required as a cofactor. Requires Zn(2+) as cofactor.

The catalysed reaction is RNA(n) + a ribonucleoside 5'-triphosphate = RNA(n+1) + diphosphate. Its function is as follows. DNA-dependent RNA polymerase catalyzes the transcription of DNA into RNA using the four ribonucleoside triphosphates as substrates. The protein is DNA-directed RNA polymerase subunit beta' of Nitrosococcus oceani (strain ATCC 19707 / BCRC 17464 / JCM 30415 / NCIMB 11848 / C-107).